Here is a 788-residue protein sequence, read N- to C-terminus: LPS-assembly protein LptD (788 aa).

The N-terminal stretch at methionine 1–alanine 23 is a signal peptide.

The protein belongs to the LptD family. As to quaternary structure, component of the lipopolysaccharide transport and assembly complex. Interacts with LptE and LptA.

It is found in the cell outer membrane. Functionally, together with LptE, is involved in the assembly of lipopolysaccharide (LPS) at the surface of the outer membrane. This chain is LPS-assembly protein LptD, found in Photobacterium profundum (strain SS9).